Here is a 324-residue protein sequence, read N- to C-terminus: Elongation factor P--(R)-beta-lysine ligase (324 aa).

75 to 77 (SPE) provides a ligand contact to substrate. ATP is bound by residues 99–101 (RNK) and asparagine 108. Tyrosine 117 provides a ligand contact to substrate. 243 to 244 (EL) provides a ligand contact to ATP. A substrate-binding site is contributed by glutamate 250. Glycine 299 provides a ligand contact to ATP.

Belongs to the class-II aminoacyl-tRNA synthetase family. EpmA subfamily. In terms of assembly, homodimer.

It catalyses the reaction D-beta-lysine + L-lysyl-[protein] + ATP = N(6)-((3R)-3,6-diaminohexanoyl)-L-lysyl-[protein] + AMP + diphosphate + H(+). Functionally, with EpmB is involved in the beta-lysylation step of the post-translational modification of translation elongation factor P (EF-P). Catalyzes the ATP-dependent activation of (R)-beta-lysine produced by EpmB, forming a lysyl-adenylate, from which the beta-lysyl moiety is then transferred to the epsilon-amino group of a conserved specific lysine residue in EF-P. The sequence is that of Elongation factor P--(R)-beta-lysine ligase from Buchnera aphidicola subsp. Acyrthosiphon pisum (strain 5A).